We begin with the raw amino-acid sequence, 516 residues long: Probable malate:quinone oxidoreductase (516 aa).

The protein belongs to the MQO family. FAD is required as a cofactor.

The enzyme catalyses (S)-malate + a quinone = a quinol + oxaloacetate. Its pathway is carbohydrate metabolism; tricarboxylic acid cycle; oxaloacetate from (S)-malate (quinone route): step 1/1. This chain is Probable malate:quinone oxidoreductase, found in Mycobacterium sp. (strain MCS).